A 43-amino-acid chain; its full sequence is MKLLNFILIIFNALKSRHLIRCLDSKCHKLFPLLEVNKSTTSL.

The N-terminal stretch at 1 to 16 is a signal peptide; it reads MKLLNFILIIFNALKS. An N-linked (GlcNAc...) asparagine; by host glycan is attached at Asn37.

This is an uncharacterized protein from Acheta domesticus (House cricket).